The chain runs to 153 residues: Flagellar assembly factor FliW (153 aa).

The protein belongs to the FliW family. In terms of assembly, interacts with translational regulator CsrA and flagellin(s).

It is found in the cytoplasm. Functionally, acts as an anti-CsrA protein, binds CsrA and prevents it from repressing translation of its target genes, one of which is flagellin. Binds to flagellin and participates in the assembly of the flagellum. This is Flagellar assembly factor FliW from Leptospira biflexa serovar Patoc (strain Patoc 1 / Ames).